A 199-amino-acid chain; its full sequence is ATP-dependent Clp protease proteolytic subunit 3 (199 aa).

Ser-101 serves as the catalytic Nucleophile. His-126 is a catalytic residue.

This sequence belongs to the peptidase S14 family. In terms of assembly, fourteen ClpP subunits assemble into 2 heptameric rings which stack back to back to give a disk-like structure with a central cavity, resembling the structure of eukaryotic proteasomes.

Its subcellular location is the cytoplasm. It carries out the reaction Hydrolysis of proteins to small peptides in the presence of ATP and magnesium. alpha-casein is the usual test substrate. In the absence of ATP, only oligopeptides shorter than five residues are hydrolyzed (such as succinyl-Leu-Tyr-|-NHMec, and Leu-Tyr-Leu-|-Tyr-Trp, in which cleavage of the -Tyr-|-Leu- and -Tyr-|-Trp bonds also occurs).. Cleaves peptides in various proteins in a process that requires ATP hydrolysis. Has a chymotrypsin-like activity. Plays a major role in the degradation of misfolded proteins. The chain is ATP-dependent Clp protease proteolytic subunit 3 from Synechococcus elongatus (strain ATCC 33912 / PCC 7942 / FACHB-805) (Anacystis nidulans R2).